A 361-amino-acid chain; its full sequence is 1-deoxy-D-xylulose 5-phosphate reductoisomerase (361 aa).

Residues T12, G13, S14, I15, G38, and N102 each coordinate NADPH. K103 lines the 1-deoxy-D-xylulose 5-phosphate pocket. E104 contributes to the NADPH binding site. D126 is a Mn(2+) binding site. Residues S127, E128, S152, and H175 each coordinate 1-deoxy-D-xylulose 5-phosphate. E128 serves as a coordination point for Mn(2+). G181 serves as a coordination point for NADPH. S188, N193, K194, and E197 together coordinate 1-deoxy-D-xylulose 5-phosphate. E197 contacts Mn(2+).

The protein belongs to the DXR family. The cofactor is Mg(2+). Requires Mn(2+) as cofactor.

The enzyme catalyses 2-C-methyl-D-erythritol 4-phosphate + NADP(+) = 1-deoxy-D-xylulose 5-phosphate + NADPH + H(+). The protein operates within isoprenoid biosynthesis; isopentenyl diphosphate biosynthesis via DXP pathway; isopentenyl diphosphate from 1-deoxy-D-xylulose 5-phosphate: step 1/6. Catalyzes the NADPH-dependent rearrangement and reduction of 1-deoxy-D-xylulose-5-phosphate (DXP) to 2-C-methyl-D-erythritol 4-phosphate (MEP). The polypeptide is 1-deoxy-D-xylulose 5-phosphate reductoisomerase (Leifsonia xyli subsp. xyli (strain CTCB07)).